The chain runs to 103 residues: Small ribosomal subunit protein uS10 (103 aa).

Belongs to the universal ribosomal protein uS10 family. As to quaternary structure, part of the 30S ribosomal subunit.

Involved in the binding of tRNA to the ribosomes. In Mycoplasmopsis pulmonis (strain UAB CTIP) (Mycoplasma pulmonis), this protein is Small ribosomal subunit protein uS10.